Here is a 1193-residue protein sequence, read N- to C-terminus: Protein diaphanous homolog 3 (1193 aa).

Residues 1–10 (MERHQPRLHH) are compositionally biased toward basic residues. The disordered stretch occupies residues 1–57 (MERHQPRLHHPAQGSAAGTPYPSSASLRGCRESKMPRRKGPQHPPPPSGPEEPGEKR). The residue at position 26 (Ser-26) is a Phosphoserine. The Nuclear localization signal signature appears at 36–60 (PRRKGPQHPPPPSGPEEPGEKRPKF). Thr-68 is subject to Phosphothreonine. Phosphoserine is present on residues Ser-77 and Ser-175. Residues 114–476 (PKPLSENELL…QIVLHRDGMD (363 aa)) form the GBD/FH3 domain. A coiled-coil region spans residues 497–554 (IDQAKLEEFEEKASELYKKFEKEFTDHQETQAELQKKEAKINELQAELQAFKSQFGAL). The segment at 558 to 622 (CNIPLPPSKE…PPPLGFLGGQ (65 aa)) is disordered. The 71-residue stretch at 561–631 (PLPPSKEGGT…QNSPPLPILP (71 aa)) folds into the FH1 domain. Pro residues predominate over residues 575–600 (LPPPPPLPSGGGVPPPPPPPPPPPLP). Ser-624 bears the Phosphoserine mark. In terms of domain architecture, FH2 spans 636 to 1034 (PKKEFKPEIS…EKRVRIAKEL (399 aa)). The stretch at 1013-1056 (KENIKKREAEEKEKRVRIAKELAERERLERQQKKKRLLEMKTEG) forms a coiled coil. The DAD domain occupies 1057–1087 (DETGVMDNLLEALQSGAAFRDRRKRTPMPKD). Ser-1093 and Ser-1179 each carry phosphoserine. The Nuclear export signal signature appears at 1184-1193 (EALLARLRAL).

Belongs to the formin homology family. Diaphanous subfamily. In terms of processing, ubiquitinated.

Its subcellular location is the cytoplasm. The protein localises to the nucleus. Its function is as follows. Actin nucleation and elongation factor required for the assembly of F-actin structures, such as actin cables and stress fibers. Required for cytokinesis, stress fiber formation and transcriptional activation of the serum response factor. Binds to GTP-bound form of Rho and to profilin: acts in a Rho-dependent manner to recruit profilin to the membrane, where it promotes actin polymerization. DFR proteins couple Rho and Src tyrosine kinase during signaling and the regulation of actin dynamics. Also acts as an actin nucleation and elongation factor in the nucleus by promoting nuclear actin polymerization inside the nucleus to drive serum-dependent SRF-MRTFA activity. The polypeptide is Protein diaphanous homolog 3 (DIAPH3) (Homo sapiens (Human)).